The sequence spans 102 residues: Large ribosomal subunit protein uL24 (102 aa).

Belongs to the universal ribosomal protein uL24 family. As to quaternary structure, part of the 50S ribosomal subunit.

Its function is as follows. One of two assembly initiator proteins, it binds directly to the 5'-end of the 23S rRNA, where it nucleates assembly of the 50S subunit. Functionally, one of the proteins that surrounds the polypeptide exit tunnel on the outside of the subunit. The polypeptide is Large ribosomal subunit protein uL24 (Cupriavidus metallidurans (strain ATCC 43123 / DSM 2839 / NBRC 102507 / CH34) (Ralstonia metallidurans)).